Here is a 519-residue protein sequence, read N- to C-terminus: Cytochrome P450 52E2 (519 aa).

2 consecutive transmembrane segments (helical) span residues 10–30 and 44–64; these read MLGG…FYFI and PIFF…NAWF. Residue cysteine 461 coordinates heme.

Belongs to the cytochrome P450 family. Heme is required as a cofactor.

The protein localises to the membrane. In terms of biological role, together with an NADPH cytochrome P450 the enzyme system catalyzes the terminal hydroxylation as the first step in the assimilation of alkanes and fatty acids. The protein is Cytochrome P450 52E2 (CYP52E2) of Candida apicola (Yeast).